Consider the following 256-residue polypeptide: Small ribosomal subunit protein eS1A (256 aa).

Position 2 is an N-acetylalanine; partial (A2).

This sequence belongs to the eukaryotic ribosomal protein eS1 family. As to quaternary structure, component of the small ribosomal subunit. Mature ribosomes consist of a small (40S) and a large (60S) subunit. The 40S subunit contains about 33 different proteins and 1 molecule of RNA (18S). The 60S subunit contains about 49 different proteins and 3 molecules of RNA (25S, 5.8S and 5S).

It localises to the cytoplasm. In Clavispora lusitaniae (strain ATCC 42720) (Yeast), this protein is Small ribosomal subunit protein eS1A.